A 620-amino-acid polypeptide reads, in one-letter code: Tyrosine-protein kinase ITK/TSK (620 aa).

A PH domain is found at 4 to 111 (FILLEEQLIK…WVLALKEETR (108 aa)). The Btk-type zinc finger occupies 113–149 (NNSLVPKYHPNFWMDGKWRCCSQLEKLATGCAQYDPT). Zn(2+)-binding residues include H121, C132, C133, and C143. Residues 171-231 (PEETVVIALY…PSSYLVEKSP (61 aa)) enclose the SH3 domain. Y180 is modified (phosphotyrosine; by autocatalysis). An SH2 domain is found at 239–338 (WYNKSISRDK…GLVTRLRYPV (100 aa)). Positions 363-615 (LTFVQEIGSG…SRLLRQLAEI (253 aa)) constitute a Protein kinase domain. ATP contacts are provided by residues 369-377 (IGSGQFGLV) and K391. The Proton acceptor role is filled by D482. Y512 carries the post-translational modification Phosphotyrosine; by LCK. S565 bears the Phosphoserine mark.

It belongs to the protein kinase superfamily. Tyr protein kinase family. TEC subfamily. Homooligomerizes; this association negatively regulates kinase activity. Interacts with PPIA/CYPA; this interaction regulates TCR signal strength via a proline-directed conformational switch in ITK. Interacts with THEMIS. Interacts with FASLG. Interacts with VAV1; this interaction is important for VAV1 localization and TCR-induced actin polarization. Interacts with TBX21. The cofactor is Zn(2+). Phosphorylated at Tyr-512 in the activation loop of the kinase domain by LCK. Subsequent autophosphorylation at Tyr-180 leads to the kinase activation. The autophosphorylated Tyr-180 lies within the substrate binding sequence of the SH3 domain. Post-translationally, ubiquitinated. As to expression, T-cell lines and natural killer cell lines.

The protein localises to the cytoplasm. Its subcellular location is the nucleus. The catalysed reaction is L-tyrosyl-[protein] + ATP = O-phospho-L-tyrosyl-[protein] + ADP + H(+). Its function is as follows. Tyrosine kinase that plays an essential role in regulation of the adaptive immune response. Regulates the development, function and differentiation of conventional T-cells and nonconventional NKT-cells. When antigen presenting cells (APC) activate T-cell receptor (TCR), a series of phosphorylation lead to the recruitment of ITK to the cell membrane, in the vicinity of the stimulated TCR receptor, where it is phosphorylated by LCK. Phosphorylation leads to ITK autophosphorylation and full activation. Once activated, phosphorylates PLCG1, leading to the activation of this lipase and subsequent cleavage of its substrates. In turn, the endoplasmic reticulum releases calcium in the cytoplasm and the nuclear activator of activated T-cells (NFAT) translocates into the nucleus to perform its transcriptional duty. Phosphorylates 2 essential adapter proteins: the linker for activation of T-cells/LAT protein and LCP2. Then, a large number of signaling molecules such as VAV1 are recruited and ultimately lead to lymphokine production, T-cell proliferation and differentiation. Required for TCR-mediated calcium response in gamma-delta T-cells, may also be involved in the modulation of the transcriptomic signature in the Vgamma2-positive subset of immature gamma-delta T-cells. Phosphorylates TBX21 at 'Tyr-530' and mediates its interaction with GATA3. In Homo sapiens (Human), this protein is Tyrosine-protein kinase ITK/TSK (ITK).